The sequence spans 269 residues: Indole-3-glycerol phosphate synthase (269 aa).

This sequence belongs to the TrpC family.

It catalyses the reaction 1-(2-carboxyphenylamino)-1-deoxy-D-ribulose 5-phosphate + H(+) = (1S,2R)-1-C-(indol-3-yl)glycerol 3-phosphate + CO2 + H2O. The protein operates within amino-acid biosynthesis; L-tryptophan biosynthesis; L-tryptophan from chorismate: step 4/5. This chain is Indole-3-glycerol phosphate synthase, found in Rhodococcus opacus (strain B4).